The primary structure comprises 372 residues: ATP phosphoribosyltransferase regulatory subunit (372 aa).

Belongs to the class-II aminoacyl-tRNA synthetase family. HisZ subfamily. As to quaternary structure, heteromultimer composed of HisG and HisZ subunits.

It localises to the cytoplasm. It functions in the pathway amino-acid biosynthesis; L-histidine biosynthesis; L-histidine from 5-phospho-alpha-D-ribose 1-diphosphate: step 1/9. In terms of biological role, required for the first step of histidine biosynthesis. May allow the feedback regulation of ATP phosphoribosyltransferase activity by histidine. This is ATP phosphoribosyltransferase regulatory subunit from Rhizobium rhizogenes (strain K84 / ATCC BAA-868) (Agrobacterium radiobacter).